Here is a 575-residue protein sequence, read N- to C-terminus: Inactive terpenoid synthase 20, chloroplastic (575 aa).

The N-terminal 52 residues, 1–52 (MEAITKNGSLSQTLVHCGPKSLSSFIPVRCLRFSKNPFPKKLVVTRARTSIN), are a transit peptide targeting the chloroplast. Residues Asp332, Asp336, Asp474, Thr478, and Glu482 each coordinate Mg(2+). The short motif at 332-336 (DDLYD) is the DDXXD motif element.

This sequence belongs to the terpene synthase family. Tpsa subfamily. As to expression, predominantly expressed in roots but also in leaves and stems.

It is found in the plastid. The protein resides in the chloroplast. Its function is as follows. Does not possess diterpene synthase activity. This is Inactive terpenoid synthase 20, chloroplastic from Arabidopsis thaliana (Mouse-ear cress).